The sequence spans 372 residues: Phospho-N-acetylmuramoyl-pentapeptide-transferase (372 aa).

10 helical membrane passes run 21-41, 71-91, 98-118, 134-154, 176-196, 211-231, 251-271, 275-295, 300-320, and 349-369; these read SLTL…MIFG, TPTM…LLWA, VWIL…DDWL, YFWL…IATL, MIPF…YFVI, GLAI…AYVS, VIIV…FNAH, VFMG…IAVM, IAFA…MLQV, and QVVA…LMTL.

The protein belongs to the glycosyltransferase 4 family. MraY subfamily. Mg(2+) is required as a cofactor.

Its subcellular location is the cell inner membrane. The enzyme catalyses UDP-N-acetyl-alpha-D-muramoyl-L-alanyl-gamma-D-glutamyl-meso-2,6-diaminopimeloyl-D-alanyl-D-alanine + di-trans,octa-cis-undecaprenyl phosphate = di-trans,octa-cis-undecaprenyl diphospho-N-acetyl-alpha-D-muramoyl-L-alanyl-D-glutamyl-meso-2,6-diaminopimeloyl-D-alanyl-D-alanine + UMP. It participates in cell wall biogenesis; peptidoglycan biosynthesis. Its function is as follows. Catalyzes the initial step of the lipid cycle reactions in the biosynthesis of the cell wall peptidoglycan: transfers peptidoglycan precursor phospho-MurNAc-pentapeptide from UDP-MurNAc-pentapeptide onto the lipid carrier undecaprenyl phosphate, yielding undecaprenyl-pyrophosphoryl-MurNAc-pentapeptide, known as lipid I. The polypeptide is Phospho-N-acetylmuramoyl-pentapeptide-transferase (Psychrobacter arcticus (strain DSM 17307 / VKM B-2377 / 273-4)).